The sequence spans 123 residues: Aspartate 1-decarboxylase (123 aa).

The Schiff-base intermediate with substrate; via pyruvic acid role is filled by Ser25. A Pyruvic acid (Ser) modification is found at Ser25. Position 57 (Thr57) interacts with substrate. Tyr58 (proton donor) is an active-site residue. 73 to 75 lines the substrate pocket; that stretch reads GAA.

Belongs to the PanD family. As to quaternary structure, heterooctamer of four alpha and four beta subunits. Pyruvate is required as a cofactor. Is synthesized initially as an inactive proenzyme, which is activated by self-cleavage at a specific serine bond to produce a beta-subunit with a hydroxyl group at its C-terminus and an alpha-subunit with a pyruvoyl group at its N-terminus.

It localises to the cytoplasm. The enzyme catalyses L-aspartate + H(+) = beta-alanine + CO2. It participates in cofactor biosynthesis; (R)-pantothenate biosynthesis; beta-alanine from L-aspartate: step 1/1. Functionally, catalyzes the pyruvoyl-dependent decarboxylation of aspartate to produce beta-alanine. The chain is Aspartate 1-decarboxylase from Clostridium novyi (strain NT).